We begin with the raw amino-acid sequence, 219 residues long: 3,4-dihydroxy-2-butanone 4-phosphate synthase (219 aa).

D-ribulose 5-phosphate-binding positions include 37 to 38 (RE), aspartate 42, 150 to 154 (RRGHT), and glutamate 174. Mg(2+) is bound at residue glutamate 38. Histidine 153 serves as a coordination point for Mg(2+).

The protein belongs to the DHBP synthase family. In terms of assembly, homodimer. The cofactor is Mg(2+). Mn(2+) serves as cofactor.

The enzyme catalyses D-ribulose 5-phosphate = (2S)-2-hydroxy-3-oxobutyl phosphate + formate + H(+). Its pathway is cofactor biosynthesis; riboflavin biosynthesis; 2-hydroxy-3-oxobutyl phosphate from D-ribulose 5-phosphate: step 1/1. Functionally, catalyzes the conversion of D-ribulose 5-phosphate to formate and 3,4-dihydroxy-2-butanone 4-phosphate. In Oleidesulfovibrio alaskensis (strain ATCC BAA-1058 / DSM 17464 / G20) (Desulfovibrio alaskensis), this protein is 3,4-dihydroxy-2-butanone 4-phosphate synthase.